A 433-amino-acid chain; its full sequence is Ornithine decarboxylase, chloroplastic (433 aa).

Lys-96 carries the post-translational modification N6-(pyridoxal phosphate)lysine. Residues Ser-228, Gly-266, and 299 to 302 (EPGR) each bind pyridoxal 5'-phosphate. Position 342–343 (342–343 (YD)) interacts with substrate. Catalysis depends on Cys-378, which acts as the Proton donor; shared with dimeric partner. Asp-379 is a substrate binding site. Position 407 (Tyr-407) interacts with pyridoxal 5'-phosphate.

It belongs to the Orn/Lys/Arg decarboxylase class-II family. In terms of assembly, homodimer. Only the dimer is catalytically active, as the active sites are constructed of residues from both monomers. It depends on pyridoxal 5'-phosphate as a cofactor.

It localises to the plastid. Its subcellular location is the chloroplast. It catalyses the reaction L-ornithine + H(+) = putrescine + CO2. Its pathway is alkaloid biosynthesis; nicotine biosynthesis. It participates in amine and polyamine biosynthesis; putrescine biosynthesis via L-ornithine pathway; putrescine from L-ornithine: step 1/1. In terms of biological role, involved in the biosynthesis of pyridine alkaloid natural products, leading mainly to the production of anabasine, anatabine, nicotine and nornicotine, effective deterrents against herbivores with antiparasitic and pesticide properties (neurotoxins); nornicotine serves as the precursor in the synthesis of the carcinogen compound N'-nitrosonornicotine (NNN). Catalyzes the first and rate-limiting step of polyamine biosynthesis that converts ornithine into putrescine, which is the precursor for the polyamines, spermidine and spermine. Polyamines are essential for cell proliferation and are implicated in cellular processes, ranging from DNA replication to apoptosis. In Nicotiana glauca (Glaucous tobacco), this protein is Ornithine decarboxylase, chloroplastic.